The sequence spans 201 residues: FMN-dependent NADH:quinone oxidoreductase (201 aa).

92–95 (MWNL) provides a ligand contact to FMN.

It belongs to the azoreductase type 1 family. Homodimer. Requires FMN as cofactor.

The catalysed reaction is 2 a quinone + NADH + H(+) = 2 a 1,4-benzosemiquinone + NAD(+). The enzyme catalyses N,N-dimethyl-1,4-phenylenediamine + anthranilate + 2 NAD(+) = 2-(4-dimethylaminophenyl)diazenylbenzoate + 2 NADH + 2 H(+). Functionally, quinone reductase that provides resistance to thiol-specific stress caused by electrophilic quinones. Also exhibits azoreductase activity. Catalyzes the reductive cleavage of the azo bond in aromatic azo compounds to the corresponding amines. The polypeptide is FMN-dependent NADH:quinone oxidoreductase (Caldicellulosiruptor saccharolyticus (strain ATCC 43494 / DSM 8903 / Tp8T 6331)).